A 276-amino-acid polypeptide reads, in one-letter code: A-factor receptor protein (276 aa).

An HTH tetR-type domain is found at 8–68 (VQTWRSIVDA…AIMDEQTSTV (61 aa)). The H-T-H motif DNA-binding region spans 31–50 (AISEILRRAKVTKGALYFHF). Residues 207-220 (EKAEREEQEARIAA) show a composition bias toward basic and acidic residues. Residues 207–276 (EKAEREEQEA…AGVAAGGVVA (70 aa)) form a disordered region. Residues 221–235 (EAKGAGSDAATDSGS) are compositionally biased toward low complexity. Over residues 236-257 (RSGGSGLRGGGSGRGPRAGGAG) the composition is skewed to gly residues.

Homodimer or multimer. Binds to both DNA and A-factor as a homodimer.

It localises to the cytoplasm. Its function is as follows. Represses adpA expression by binding to the promoter region in the absence of A-factor, causing repression of streptomycin production and of sporulation. In Streptomyces griseus, this protein is A-factor receptor protein (arpA).